Consider the following 241-residue polypeptide: Triosephosphate isomerase (241 aa).

9–11 (NWK) lines the substrate pocket. Residue histidine 96 is the Electrophile of the active site. The active-site Proton acceptor is the glutamate 165. Substrate contacts are provided by residues glycine 171, serine 204, and 225–226 (GG).

Belongs to the triosephosphate isomerase family. In terms of assembly, homodimer.

It localises to the cytoplasm. It catalyses the reaction D-glyceraldehyde 3-phosphate = dihydroxyacetone phosphate. It functions in the pathway carbohydrate biosynthesis; gluconeogenesis. It participates in carbohydrate degradation; glycolysis; D-glyceraldehyde 3-phosphate from glycerone phosphate: step 1/1. Involved in the gluconeogenesis. Catalyzes stereospecifically the conversion of dihydroxyacetone phosphate (DHAP) to D-glyceraldehyde-3-phosphate (G3P). In Trichodesmium erythraeum (strain IMS101), this protein is Triosephosphate isomerase.